The following is a 336-amino-acid chain: Nuclear envelope-associated protein 3 (336 aa).

Coiled-coil stretches lie at residues 14–87 (LKDL…IRAS) and 128–261 (VLSK…LKKK). The Bipartite nuclear localization signal motif lies at 240-261 (KTKELEDQVENQRRIDQELKKK). A helical membrane pass occupies residues 313–330 (LWDKSGFKIVVSMSMLIL).

Forms homomers and heteromers with NEAP1 and NEAP2. Interacts with SUN1 and SUN2.

It is found in the nucleus inner membrane. The protein resides in the nucleus. Its subcellular location is the nucleoplasm. In Arabidopsis thaliana (Mouse-ear cress), this protein is Nuclear envelope-associated protein 3.